A 145-amino-acid polypeptide reads, in one-letter code: Acidic phospholipase A2 (145 aa).

Residues 1 to 19 (MNPAHLLILSAVCVSLLGA) form the signal peptide. Residues 20–27 (ANVPPQHL) constitute a propeptide that is removed on maturation. 7 disulfide bridges follow: cysteine 38-cysteine 97, cysteine 52-cysteine 144, cysteine 54-cysteine 70, cysteine 69-cysteine 125, cysteine 76-cysteine 118, cysteine 86-cysteine 111, and cysteine 104-cysteine 116. Tyrosine 53, glycine 55, and glycine 57 together coordinate Ca(2+). Histidine 73 is an active-site residue. Aspartate 74 serves as a coordination point for Ca(2+). Aspartate 119 is an active-site residue.

This sequence belongs to the phospholipase A2 family. Group I subfamily. D49 sub-subfamily. It depends on Ca(2+) as a cofactor. As to expression, expressed by the venom gland.

The protein resides in the secreted. The enzyme catalyses a 1,2-diacyl-sn-glycero-3-phosphocholine + H2O = a 1-acyl-sn-glycero-3-phosphocholine + a fatty acid + H(+). Its function is as follows. PLA2 catalyzes the calcium-dependent hydrolysis of the 2-acyl groups in 3-sn-phosphoglycerides. The sequence is that of Acidic phospholipase A2 from Bungarus multicinctus (Many-banded krait).